The sequence spans 497 residues: Probable pyruvate kinase, cytosolic isozyme (497 aa).

Residue Arg-37 coordinates substrate. 4 residues coordinate K(+): Asn-39, Ser-41, Asp-71, and Thr-72. Position 39–42 (39–42 (NFSH)) interacts with ATP. ATP-binding residues include Arg-78 and Lys-163. Lys-227 lines the substrate pocket. Glu-229 contributes to the Mg(2+) binding site. Gly-252, Asp-253, and Thr-285 together coordinate substrate. Asp-253 contributes to the Mg(2+) binding site.

The protein belongs to the pyruvate kinase family. Homotetramer. Mg(2+) is required as a cofactor. The cofactor is K(+).

The protein localises to the cytoplasm. It localises to the cytosol. The enzyme catalyses pyruvate + ATP = phosphoenolpyruvate + ADP + H(+). It participates in carbohydrate degradation; glycolysis; pyruvate from D-glyceraldehyde 3-phosphate: step 5/5. In terms of biological role, key regulatory enzyme of the glycolytic pathway that catalyzes the final step of glycolysis, converting ADP and phosphoenolpyruvate (PEP) to ATP and pyruvate by essentially irreversible transphosphorylation. The chain is Probable pyruvate kinase, cytosolic isozyme from Arabidopsis thaliana (Mouse-ear cress).